The chain runs to 698 residues: Endogenous retrovirus group K member 9 Env polyprotein (698 aa).

The tract at residues 1–47 (MNPSEMQRKAPPRRRRHRNRAPLTHKMNKMVTSEEQMKLPSTKKAEP) is disordered. A signal peptide spans 1 to 89 (MNPSEMQRKA…ALMIVSMVVS (89 aa)). Basic residues predominate over residues 10-20 (APPRRRRHRNR). At 90-631 (LPMPAGAAAA…NLNPVTWVKT (542 aa)) the chain is on the extracellular side. N-linked (GlcNAc...) asparagine glycosylation is found at Asn100, Asn128, Asn153, Asn273, Asn354, Asn371, and Asn460. Residues 465–485 (FIFTLIAVIMGLIAVTATAAV) form a fusion peptide region. Residues Asn506, Asn553, Asn565, and Asn584 are each glycosylated (N-linked (GlcNAc...) asparagine). Residues 632-652 (IGSTTIINLILILVCLFCLLL) traverse the membrane as a helical segment. Topologically, residues 653–698 (VCRCTQQLRRDSDHRERAMMTMAVLSKRKGGNVGKSKRDQIVTVSV) are cytoplasmic.

The protein belongs to the beta type-B retroviral envelope protein family. HERV class-II K(HML-2) env subfamily. As to quaternary structure, the surface (SU) and transmembrane (TM) proteins form a heterodimer. SU and TM are attached by noncovalent interactions or by a labile interchain disulfide bond. Post-translationally, specific enzymatic cleavages in vivo yield the mature SU and TM proteins.

The protein localises to the cell membrane. It is found in the virion. Retroviral envelope proteins mediate receptor recognition and membrane fusion during early infection. Endogenous envelope proteins may have kept, lost or modified their original function during evolution. This endogenous envelope protein has lost its original fusogenic properties. Functionally, SU mediates receptor recognition. In terms of biological role, TM anchors the envelope heterodimer to the viral membrane through one transmembrane domain. The other hydrophobic domain, called fusion peptide, mediates fusion of the viral membrane with the target cell membrane. This chain is Endogenous retrovirus group K member 9 Env polyprotein (ERVK-9), found in Homo sapiens (Human).